The chain runs to 216 residues: Dephospho-CoA kinase (216 aa).

The region spanning 18-216 (IIGVIGPPCS…SELASVLQSK (199 aa)) is the DPCK domain. 26 to 31 (CSGKST) is an ATP binding site.

Belongs to the CoaE family.

Its subcellular location is the cytoplasm. The catalysed reaction is 3'-dephospho-CoA + ATP = ADP + CoA + H(+). It functions in the pathway cofactor biosynthesis; coenzyme A biosynthesis; CoA from (R)-pantothenate: step 5/5. Functionally, catalyzes the phosphorylation of the 3'-hydroxyl group of dephosphocoenzyme A to form coenzyme A. This chain is Dephospho-CoA kinase, found in Rhodopirellula baltica (strain DSM 10527 / NCIMB 13988 / SH1).